Reading from the N-terminus, the 481-residue chain is UDP-N-acetylmuramoyl-L-alanyl-D-glutamate--L-lysine ligase (481 aa).

Serine 42 is a UDP-N-acetyl-alpha-D-muramoyl-L-alanyl-D-glutamate binding site. 118-124 (GTKGKTT) is an ATP binding site. UDP-N-acetyl-alpha-D-muramoyl-L-alanyl-D-glutamate contacts are provided by residues glutamine 158, 160 to 161 (TT), serine 187, and arginine 195. Lysine 229 carries the N6-carboxylysine modification. An L-lysine recognition motif motif is present at residues 404–407 (DDPN).

The protein belongs to the MurCDEF family. MurE subfamily. In terms of processing, carboxylation is probably crucial for Mg(2+) binding and, consequently, for the gamma-phosphate positioning of ATP.

Its subcellular location is the cytoplasm. It catalyses the reaction UDP-N-acetyl-alpha-D-muramoyl-L-alanyl-D-glutamate + L-lysine + ATP = UDP-N-acetyl-alpha-D-muramoyl-L-alanyl-gamma-D-glutamyl-L-lysine + ADP + phosphate + H(+). The protein operates within cell wall biogenesis; peptidoglycan biosynthesis. Functionally, catalyzes the addition of L-lysine to the nucleotide precursor UDP-N-acetylmuramoyl-L-alanyl-D-glutamate (UMAG) in the biosynthesis of bacterial cell-wall peptidoglycan. The sequence is that of UDP-N-acetylmuramoyl-L-alanyl-D-glutamate--L-lysine ligase from Streptococcus pyogenes serotype M18 (strain MGAS8232).